A 689-amino-acid polypeptide reads, in one-letter code: Glycine--tRNA ligase beta subunit (689 aa).

It belongs to the class-II aminoacyl-tRNA synthetase family. Tetramer of two alpha and two beta subunits.

The protein localises to the cytoplasm. The enzyme catalyses tRNA(Gly) + glycine + ATP = glycyl-tRNA(Gly) + AMP + diphosphate. This Acinetobacter baylyi (strain ATCC 33305 / BD413 / ADP1) protein is Glycine--tRNA ligase beta subunit.